Here is a 231-residue protein sequence, read N- to C-terminus: NADH-ubiquinone oxidoreductase chain 4 (231 aa).

6 helical membrane-spanning segments follow: residues 1–21, 34–54, 61–80, 84–106, 128–148, and 169–189; these read PIAG…YGII, LFLP…LTCL, SLIA…AIII, WGLS…LFCL, ILPM…ATPP, and TIIL…HMFL.

Belongs to the complex I subunit 4 family.

The protein resides in the mitochondrion membrane. The catalysed reaction is a ubiquinone + NADH + 5 H(+)(in) = a ubiquinol + NAD(+) + 4 H(+)(out). In terms of biological role, core subunit of the mitochondrial membrane respiratory chain NADH dehydrogenase (Complex I) that is believed to belong to the minimal assembly required for catalysis. Complex I functions in the transfer of electrons from NADH to the respiratory chain. The immediate electron acceptor for the enzyme is believed to be ubiquinone. The sequence is that of NADH-ubiquinone oxidoreductase chain 4 (MT-ND4) from Metlapilcoatlus nummifer (Mexican jumping pitviper).